We begin with the raw amino-acid sequence, 124 residues long: MLPAQYRMTRSTEFGATVSRGTRAAQPDLVLYTLRSDETGEPGPRVGLIVSKAVGNAVVRHRVSRRLRHAARGILERLDSRDRVVIRALPRSRDAGTQRFEQELHTALDRIHARTITARNGAPS.

Belongs to the RnpA family. In terms of assembly, consists of a catalytic RNA component (M1 or rnpB) and a protein subunit.

It carries out the reaction Endonucleolytic cleavage of RNA, removing 5'-extranucleotides from tRNA precursor.. In terms of biological role, RNaseP catalyzes the removal of the 5'-leader sequence from pre-tRNA to produce the mature 5'-terminus. It can also cleave other RNA substrates such as 4.5S RNA. The protein component plays an auxiliary but essential role in vivo by binding to the 5'-leader sequence and broadening the substrate specificity of the ribozyme. The chain is Ribonuclease P protein component from Mycolicibacterium gilvum (strain PYR-GCK) (Mycobacterium gilvum (strain PYR-GCK)).